A 614-amino-acid polypeptide reads, in one-letter code: MFNKIFSWFENRLNPYPESNPTTPKKGLFRFIWSSITGMKGWIFLLAILTVGTGVMEAVLFQFMGTLVDWLGTFTPERLWQEKSHLLIGMAALLLISIVWGFLASAVHLQTLQGVFPMRLRWNFHRLMLGQSLSFYQDEFAGRVSAKVMQTALAVRDTVLTLANMFVYVLVYFITSGVVLVALDSWFLLPFITWIILFGLILRTLIPKLSKTAQRQADARSLMTGRITDAYSNIATVKLFSHGSREATYAKRSMQDFMVTVHAQMRLATSLDTLTYATNILLTLSTAILGIILWKNGQVGVGAIATATAMALRVNGLSRWIMWESARLFENIGTVNDGMNTLTKPHTIVDKPQASPLQVKQGEIKFNDITFAYDPTKPLLNHFNLTIKPGEKVGLIGRSGAGKSTIVNLLLRFYEAQQGEITIDGQNVLNVQQESLRRQIGLVTQDTSLLHRSVRDNIIYGRPNATDEEMVLAAERAEAADFIPFLSDSQGRKGYDAHVGERGVKLSGGQRQRIAIARVMLKDAPILLLDEATSALDSEVEVAIQESLDKMMENKTVIAIAHRLSTIAAMDRLIVLDKGQIVEQGTHAELLELNGLYAKLWNHQSGGFLSESAE.

The next 4 membrane-spanning stretches (helical) occupy residues 41 to 61, 87 to 107, 157 to 177, and 178 to 198; these read GWIF…AVLF, LIGM…ASAV, DTVL…ITSG, and VVLV…IILF. The 288-residue stretch at 43 to 330 folds into the ABC transmembrane type-1 domain; the sequence is IFLLAILTVG…IMWESARLFE (288 aa). The ABC transporter domain occupies 364-603; sequence IKFNDITFAY…NGLYAKLWNH (240 aa). Position 397 to 404 (397 to 404) interacts with ATP; that stretch reads GRSGAGKS.

Belongs to the ABC transporter superfamily.

It is found in the cell membrane. This is an uncharacterized protein from Haemophilus influenzae (strain ATCC 51907 / DSM 11121 / KW20 / Rd).